A 793-amino-acid polypeptide reads, in one-letter code: Protein translocase subunit SecA 2 (793 aa).

Residues Gln-77, 95–99 (GEGKT), and Asp-493 each bind ATP.

This sequence belongs to the SecA family. As to quaternary structure, monomer and homodimer. Part of the essential Sec protein translocation apparatus which comprises SecA, SecYEG and auxiliary proteins SecDF. Other proteins may also be involved.

It is found in the cell membrane. It localises to the cytoplasm. It catalyses the reaction ATP + H2O + cellular proteinSide 1 = ADP + phosphate + cellular proteinSide 2.. Functionally, part of the Sec protein translocase complex. Interacts with the SecYEG preprotein conducting channel. Has a central role in coupling the hydrolysis of ATP to the transfer of proteins into and across the cell membrane, serving as an ATP-driven molecular motor driving the stepwise translocation of polypeptide chains across the membrane. In Streptococcus sanguinis (strain SK36), this protein is Protein translocase subunit SecA 2.